Consider the following 262-residue polypeptide: Phosphatidylserine decarboxylase proenzyme (262 aa).

Residues D86, H142, and S226 each act as charge relay system; for autoendoproteolytic cleavage activity in the active site. S226 functions as the Schiff-base intermediate with substrate; via pyruvic acid; for decarboxylase activity in the catalytic mechanism. Position 226 is a pyruvic acid (Ser); by autocatalysis (S226).

Belongs to the phosphatidylserine decarboxylase family. PSD-B subfamily. Prokaryotic type I sub-subfamily. As to quaternary structure, heterodimer of a large membrane-associated beta subunit and a small pyruvoyl-containing alpha subunit. It depends on pyruvate as a cofactor. Post-translationally, is synthesized initially as an inactive proenzyme. Formation of the active enzyme involves a self-maturation process in which the active site pyruvoyl group is generated from an internal serine residue via an autocatalytic post-translational modification. Two non-identical subunits are generated from the proenzyme in this reaction, and the pyruvate is formed at the N-terminus of the alpha chain, which is derived from the carboxyl end of the proenzyme. The autoendoproteolytic cleavage occurs by a canonical serine protease mechanism, in which the side chain hydroxyl group of the serine supplies its oxygen atom to form the C-terminus of the beta chain, while the remainder of the serine residue undergoes an oxidative deamination to produce ammonia and the pyruvoyl prosthetic group on the alpha chain. During this reaction, the Ser that is part of the protease active site of the proenzyme becomes the pyruvoyl prosthetic group, which constitutes an essential element of the active site of the mature decarboxylase.

Its subcellular location is the cell membrane. It carries out the reaction a 1,2-diacyl-sn-glycero-3-phospho-L-serine + H(+) = a 1,2-diacyl-sn-glycero-3-phosphoethanolamine + CO2. The protein operates within phospholipid metabolism; phosphatidylethanolamine biosynthesis; phosphatidylethanolamine from CDP-diacylglycerol: step 2/2. Catalyzes the formation of phosphatidylethanolamine (PtdEtn) from phosphatidylserine (PtdSer). The polypeptide is Phosphatidylserine decarboxylase proenzyme (Bacillus thuringiensis (strain Al Hakam)).